The sequence spans 166 residues: Phospholipase A2 inhibitor clone 10 (166 aa).

The signal sequence occupies residues M1–G19. One can recognise a C-type lectin domain in the interval L46–E161. Disulfide bonds link C83–C160 and C138–C152. Residue N122 is glycosylated (N-linked (GlcNAc...) asparagine).

The protein belongs to the alpha-type phospholipase A2 inhibitor family. In terms of assembly, homotrimer; non-covalently linked. Expressed by the liver.

Its subcellular location is the secreted. Functionally, this phospholipase A2 inhibitor binds directly phospholipase A2 in the presence or absence of calcium. The polypeptide is Phospholipase A2 inhibitor clone 10 (Bothrops moojeni (Lance-headed viper)).